A 259-amino-acid chain; its full sequence is UPF0246 protein Pfl01_0961 (259 aa).

It belongs to the UPF0246 family.

The sequence is that of UPF0246 protein Pfl01_0961 from Pseudomonas fluorescens (strain Pf0-1).